The chain runs to 511 residues: ATP synthase subunit alpha 2 (511 aa).

173 to 180 is an ATP binding site; sequence GDRQTGKS.

The protein belongs to the ATPase alpha/beta chains family. In terms of assembly, F-type ATPases have 2 components, CF(1) - the catalytic core - and CF(0) - the membrane proton channel. CF(1) has five subunits: alpha(3), beta(3), gamma(1), delta(1), epsilon(1). CF(0) has three main subunits: a(1), b(2) and c(9-12). The alpha and beta chains form an alternating ring which encloses part of the gamma chain. CF(1) is attached to CF(0) by a central stalk formed by the gamma and epsilon chains, while a peripheral stalk is formed by the delta and b chains.

The protein localises to the cell inner membrane. The catalysed reaction is ATP + H2O + 4 H(+)(in) = ADP + phosphate + 5 H(+)(out). In terms of biological role, produces ATP from ADP in the presence of a proton gradient across the membrane. The alpha chain is a regulatory subunit. The sequence is that of ATP synthase subunit alpha 2 from Nitrosospira multiformis (strain ATCC 25196 / NCIMB 11849 / C 71).